The primary structure comprises 161 residues: Probable endopeptidase HI_1314 (161 aa).

The signal sequence occupies residues 1 to 18 (MKVYKSFLIATASLFLFA). Cysteine 19 carries the N-palmitoyl cysteine lipid modification. Cysteine 19 is lipidated: S-diacylglycerol cysteine. In terms of domain architecture, NlpC/P60 spans 39–161 (IMAIAMLSEQ…SKAFWQVRRI (123 aa)). Cysteine 69 (nucleophile) is an active-site residue. Histidine 122 (proton acceptor) is an active-site residue. Histidine 134 is a catalytic residue.

This sequence belongs to the peptidase C40 family.

It localises to the cell membrane. The polypeptide is Probable endopeptidase HI_1314 (Haemophilus influenzae (strain ATCC 51907 / DSM 11121 / KW20 / Rd)).